Here is a 439-residue protein sequence, read N- to C-terminus: Acyl transferase 4 (439 aa).

Catalysis depends on proton acceptor residues His-166 and Asp-382.

Belongs to the plant acyltransferase family.

In terms of biological role, grass-specific monolignol p-coumaroyl transferase involved in the biosynthesis of acylated monolignols or monolignol conjugates that serve as monomer precursors of lignin. Can synthesize sinapyl p-coumarate, p-coumaryl p-coumarate, sinapyl caffeate and p-coumaryl caffeate in vitro. The sequence is that of Acyl transferase 4 from Oryza sativa subsp. japonica (Rice).